We begin with the raw amino-acid sequence, 407 residues long: Arginine deiminase (407 aa).

C397 functions as the Amidino-cysteine intermediate in the catalytic mechanism.

This sequence belongs to the arginine deiminase family.

The protein localises to the cytoplasm. It catalyses the reaction L-arginine + H2O = L-citrulline + NH4(+). The protein operates within amino-acid degradation; L-arginine degradation via ADI pathway; carbamoyl phosphate from L-arginine: step 1/2. This Escherichia coli O81 (strain ED1a) protein is Arginine deiminase.